Reading from the N-terminus, the 617-residue chain is Protelomerase (617 aa).

R270, K295, R376, and H409 together coordinate DNA. The Nucleophile role is filled by Y418. Residues 535–562 show a composition bias toward acidic residues; the sequence is DAEEDEIEEDFTDEEIDDTEFDVSDNAS. Residues 535 to 575 are disordered; it reads DAEEDEIEEDFTDEEIDDTEFDVSDNASDEDKPEDKPRFAA. The span at 563–575 shows a compositional bias: basic and acidic residues; the sequence is DEDKPEDKPRFAA.

The protein belongs to the Caudoviricetes Protelomerase family. In terms of assembly, monomer. Homodimer; in presence of DNA.

Converts the circular intermediates produced by the viral replication and carrying a joined telomere site to a linear DNA molecule with covalently closed hairpin ends. The viral circular DNA is cleaved at a palindromic site called telRL thereby generating a linear prophage plasmid with telomeres. Binds covalently to the 3'-phosphoryl of the cleaved strands. The protein is Protelomerase (tel) of Yersinia enterocolitica (Bacteriophage PY54).